Reading from the N-terminus, the 356-residue chain is 3-dehydroquinate synthase (356 aa).

NAD(+) is bound by residues 106-110 (GVVGD), 130-131 (TT), K143, and K152. Residues E185, H248, and H265 each coordinate Zn(2+).

Belongs to the sugar phosphate cyclases superfamily. Dehydroquinate synthase family. NAD(+) is required as a cofactor. Requires Co(2+) as cofactor. It depends on Zn(2+) as a cofactor.

Its subcellular location is the cytoplasm. The catalysed reaction is 7-phospho-2-dehydro-3-deoxy-D-arabino-heptonate = 3-dehydroquinate + phosphate. The protein operates within metabolic intermediate biosynthesis; chorismate biosynthesis; chorismate from D-erythrose 4-phosphate and phosphoenolpyruvate: step 2/7. Catalyzes the conversion of 3-deoxy-D-arabino-heptulosonate 7-phosphate (DAHP) to dehydroquinate (DHQ). In Caldanaerobacter subterraneus subsp. tengcongensis (strain DSM 15242 / JCM 11007 / NBRC 100824 / MB4) (Thermoanaerobacter tengcongensis), this protein is 3-dehydroquinate synthase.